Reading from the N-terminus, the 557-residue chain is CTP synthase (557 aa).

The tract at residues 1–267 is amidoligase domain; sequence MAKYIFVTGG…GAYLTQRLGL (267 aa). Position 13 (S13) interacts with CTP. S13 is a binding site for UTP. Position 14 to 19 (14 to 19) interacts with ATP; the sequence is SVGKGI. Position 54 (Y54) interacts with L-glutamine. ATP is bound at residue D71. Mg(2+) contacts are provided by D71 and E141. CTP contacts are provided by residues 148 to 150, 188 to 193, and K224; these read DIE and KTKPTQ. UTP-binding positions include 188-193 and K224; that span reads KTKPTQ. The Glutamine amidotransferase type-1 domain occupies 292–535; sequence AIALVGKYVE…VAAAAKTFRE (244 aa). L-glutamine is bound at residue G354. The active-site Nucleophile; for glutamine hydrolysis is C381. L-glutamine contacts are provided by residues 382 to 385, E406, and R463; that span reads LGMQ. Catalysis depends on residues H508 and E510. The disordered stretch occupies residues 536–557; sequence GDQRPLPLEQNGAVTEHEPHSR.

This sequence belongs to the CTP synthase family. Homotetramer.

It catalyses the reaction UTP + L-glutamine + ATP + H2O = CTP + L-glutamate + ADP + phosphate + 2 H(+). It carries out the reaction L-glutamine + H2O = L-glutamate + NH4(+). The enzyme catalyses UTP + NH4(+) + ATP = CTP + ADP + phosphate + 2 H(+). It participates in pyrimidine metabolism; CTP biosynthesis via de novo pathway; CTP from UDP: step 2/2. With respect to regulation, allosterically activated by GTP, when glutamine is the substrate; GTP has no effect on the reaction when ammonia is the substrate. The allosteric effector GTP functions by stabilizing the protein conformation that binds the tetrahedral intermediate(s) formed during glutamine hydrolysis. Inhibited by the product CTP, via allosteric rather than competitive inhibition. Its function is as follows. Catalyzes the ATP-dependent amination of UTP to CTP with either L-glutamine or ammonia as the source of nitrogen. Regulates intracellular CTP levels through interactions with the four ribonucleotide triphosphates. The chain is CTP synthase from Roseiflexus sp. (strain RS-1).